The sequence spans 118 residues: Actin depolymerizing factor ADF (118 aa).

The region spanning 4-118 is the ADF-H domain; sequence GMGVDENCVA…HEMGDLAPLA (115 aa).

The protein belongs to the actin-binding proteins ADF family. Interacts with ACT1 (G-actin); the interaction results in inhibition of actin polymerization. Interacts with DPA; the interaction enhances ADF activity in disassembly of filamentous actin and inhibition of actin polymerization.

The protein localises to the cytoplasm. Inhibits actin polymerization. Promotes actin depolymerization. Strongly sequesters actin monomers (G-actin). Weakly severs actin filaments (F-actin). This is Actin depolymerizing factor ADF from Toxoplasma gondii.